A 246-amino-acid chain; its full sequence is MADS-box protein EJ2 (246 aa).

Residues 1-61 enclose the MADS-box domain; that stretch reads MGRGRVELKR…GKLYEFCSTS (61 aa). Residues 87–177 form the K-box domain; sequence TQNNYHEYLR…RRKLEESVAG (91 aa).

It is found in the nucleus. Functionally, MADS-box transcription factor that acts redundantly with J2 to control meristem maturation and inflorescence architecture. The chain is MADS-box protein EJ2 from Solanum lycopersicum (Tomato).